The chain runs to 131 residues: Small ribosomal subunit protein bS6 (131 aa).

It belongs to the bacterial ribosomal protein bS6 family.

Functionally, binds together with bS18 to 16S ribosomal RNA. In Borrelia hermsii (strain HS1 / DAH), this protein is Small ribosomal subunit protein bS6.